The following is a 313-amino-acid chain: MSQRDTLVHLFAGGCGGTVGAILTCPLEVVKTRLQSSSVTLYISEVHLNTVNGASVNRVTRVSPGPLHCLKMILQKEGPRSLFRGLGPNLVGVAPSRAIYFAAYSNCKEKLNNIFNPDSTQVHMISAGVAGFTAITMTNPIWLVKTRLQLDARNRGEKRMSAFECVRKVYRSDGIKGFYRGMSASYAGISETVIHFVIYESIKRKLLEHKTASAMDSEDESAKEASDFVGMMMAAATSKTCATSIAYPHEVVRTRLREEGTKYRSFFQTLSLLVREEGYGSLYRGLTTHLVRQIPNTAIMMSTYEVVVYLLDG.

3 Solcar repeats span residues 4–110, 118–205, and 226–310; these read RDTL…CKEK, DSTQ…IKRK, and SDFV…VVYL. 6 helical membrane passes run 7-27, 41-57, 113-133, 182-202, 228-248, and 293-313; these read LVHL…TCPL, LYIS…ASVN, NIFN…AGFT, MSAS…YESI, FVGM…IAYP, and QIPN…LLDG.

It belongs to the mitochondrial carrier (TC 2.A.29) family.

The protein resides in the mitochondrion inner membrane. Its function is as follows. Mitochondrial transporter that imports/exports pyrimidine nucleotides into and from mitochondria. Transports preferentially cytosine and uracil (deoxy)nucleoside mono-, di-, and triphosphates by uniport and antiport mechanism. This is Solute carrier family 25 member 36 (SLC25A36) from Gallus gallus (Chicken).